A 285-amino-acid chain; its full sequence is Methionine aminopeptidase 2 (285 aa).

A substrate-binding site is contributed by His-114. A divalent metal cation-binding residues include Asp-131, Asp-142, and His-205. His-212 contributes to the substrate binding site. A divalent metal cation-binding residues include Glu-238 and Glu-269.

As to quaternary structure, monomer. Requires Co(2+) as cofactor. The cofactor is Zn(2+). Mn(2+) is required as a cofactor. It depends on Fe(2+) as a cofactor.

The enzyme catalyses Release of N-terminal amino acids, preferentially methionine, from peptides and arylamides.. Its activity is regulated as follows. Inhibited by bengamide derivatives and by various metalloform-selective inhibitors. Its function is as follows. Removes the N-terminal methionine from nascent proteins. The N-terminal methionine is often cleaved when the second residue in the primary sequence is small and uncharged (Met-Ala-, Cys, Gly, Pro, Ser, Thr, or Val). Requires deformylation of the N(alpha)-formylated initiator methionine before it can be hydrolyzed. In Mycobacterium tuberculosis (strain ATCC 25618 / H37Rv), this protein is Methionine aminopeptidase 2.